We begin with the raw amino-acid sequence, 356 residues long: Dihydroorotate dehydrogenase (quinone) (356 aa).

Residues 66–70 (AGFDK) and Thr-90 contribute to the FMN site. Position 70 (Lys-70) interacts with substrate. Residue 115-119 (NRMGF) coordinates substrate. Asn-143 and Asn-176 together coordinate FMN. Asn-176 lines the substrate pocket. Ser-179 (nucleophile) is an active-site residue. Asn-181 is a substrate binding site. 2 residues coordinate FMN: Lys-212 and Thr-240. 241 to 242 (NT) provides a ligand contact to substrate. FMN contacts are provided by residues Gly-266, Gly-295, and 316 to 317 (YT).

Belongs to the dihydroorotate dehydrogenase family. Type 2 subfamily. In terms of assembly, monomer. The cofactor is FMN.

It is found in the cell membrane. The catalysed reaction is (S)-dihydroorotate + a quinone = orotate + a quinol. The protein operates within pyrimidine metabolism; UMP biosynthesis via de novo pathway; orotate from (S)-dihydroorotate (quinone route): step 1/1. In terms of biological role, catalyzes the conversion of dihydroorotate to orotate with quinone as electron acceptor. The polypeptide is Dihydroorotate dehydrogenase (quinone) (Rhodococcus erythropolis (strain PR4 / NBRC 100887)).